Consider the following 171-residue polypeptide: Adenine phosphoribosyltransferase (171 aa).

Belongs to the purine/pyrimidine phosphoribosyltransferase family. In terms of assembly, homodimer.

It is found in the cytoplasm. The catalysed reaction is AMP + diphosphate = 5-phospho-alpha-D-ribose 1-diphosphate + adenine. It functions in the pathway purine metabolism; AMP biosynthesis via salvage pathway; AMP from adenine: step 1/1. Functionally, catalyzes a salvage reaction resulting in the formation of AMP, that is energically less costly than de novo synthesis. This chain is Adenine phosphoribosyltransferase, found in Shouchella clausii (strain KSM-K16) (Alkalihalobacillus clausii).